The following is a 176-amino-acid chain: Co-chaperone protein HscB homolog (176 aa).

The J domain maps to D8–L80.

Belongs to the HscB family. As to quaternary structure, interacts with HscA and stimulates its ATPase activity.

Functionally, co-chaperone involved in the maturation of iron-sulfur cluster-containing proteins. Seems to help targeting proteins to be folded toward HscA. The sequence is that of Co-chaperone protein HscB homolog from Cupriavidus taiwanensis (strain DSM 17343 / BCRC 17206 / CCUG 44338 / CIP 107171 / LMG 19424 / R1) (Ralstonia taiwanensis (strain LMG 19424)).